The sequence spans 206 residues: MATAWGLRWGLSRTGTLLLAPPARCARRALHRQVDGTTFQSIYSLDKLYPESKGADTAWKVPEHAKQASSYIPLDRLSISYCRSSGPGGQNVNKVNSKAEVRFHLASADWIEEPVRQKIALTHKNKINKAGELVLTSESSRYQFRNLAECLQKIRDMIAEASQVPKEPSKEDARLQRLRIEKMNRERLRQKRLNSALKTSRRMTMD.

Residues 1–29 (MATAWGLRWGLSRTGTLLLAPPARCARRA) constitute a mitochondrion transit peptide. Q90 carries the post-translational modification N5-methylglutamine.

The protein belongs to the prokaryotic/mitochondrial release factor family. Mitochondrion-specific ribosomal protein mL62 subfamily. Component of the mitochondrial ribosome large subunit (39S) which comprises a 16S rRNA and about 50 distinct proteins. In terms of processing, methylation of glutamine in the GGQ triplet by HEMK1.

The protein resides in the mitochondrion. The enzyme catalyses an N-acyl-L-alpha-aminoacyl-tRNA + H2O = an N-acyl-L-amino acid + a tRNA + H(+). In terms of biological role, essential peptidyl-tRNA hydrolase component of the mitochondrial large ribosomal subunit. Acts as a codon-independent translation release factor that has lost all stop codon specificity and directs the termination of translation in mitochondrion, possibly in case of abortive elongation. May be involved in the hydrolysis of peptidyl-tRNAs that have been prematurely terminated and thus in the recycling of stalled mitochondrial ribosomes. This is Large ribosomal subunit protein mL62 from Mus musculus (Mouse).